Consider the following 266-residue polypeptide: Energy-coupling factor transporter ATP-binding protein EcfA2 (266 aa).

An ABC transporter domain is found at I3–M238. G43–T48 lines the ATP pocket. E164 acts as the Proton acceptor in catalysis. Positions G220 to S266 are required for heterodimer formation.

It belongs to the ABC transporter superfamily. Energy-coupling factor EcfA family. As to quaternary structure, forms a heterodimer with EcfA1. Forms a stable energy-coupling factor (ECF) transporter complex composed of 2 membrane-embedded substrate-binding proteins (S component, RibU, BioY), 2 ATP-binding proteins (A component) and 2 transmembrane proteins (T component) upon coexpression in E.coli. Stable subcomplexes with both A plus T components can also be isolated. This complex interacts with at least 2 substrate-specific components, BioY and RibU.

The protein localises to the cell inner membrane. ATP-binding (A) component of a common energy-coupling factor (ECF) ABC-transporter complex. Unlike classic ABC transporters this ECF transporter provides the energy necessary to transport a number of different substrates. Expression of the complex plus RibU in E.coli allows riboflavin uptake; uptake does not occur in the absence of RibU or the EcfA1A2T complex. This Thermotoga maritima (strain ATCC 43589 / DSM 3109 / JCM 10099 / NBRC 100826 / MSB8) protein is Energy-coupling factor transporter ATP-binding protein EcfA2 (ecfA2).